A 56-amino-acid polypeptide reads, in one-letter code: Small ribosomal subunit protein uS14 (56 aa).

This sequence belongs to the universal ribosomal protein uS14 family.

This is Small ribosomal subunit protein uS14 (RPS29) from Kluyveromyces lactis (strain ATCC 8585 / CBS 2359 / DSM 70799 / NBRC 1267 / NRRL Y-1140 / WM37) (Yeast).